The primary structure comprises 242 residues: Pyridoxine 5'-phosphate synthase (242 aa).

N7 contributes to the 3-amino-2-oxopropyl phosphate binding site. A 1-deoxy-D-xylulose 5-phosphate-binding site is contributed by 9 to 10 (DH). Residue R18 participates in 3-amino-2-oxopropyl phosphate binding. Catalysis depends on H44, which acts as the Proton acceptor. 1-deoxy-D-xylulose 5-phosphate-binding residues include R46 and H51. The active-site Proton acceptor is the E71. Position 101 (T101) interacts with 1-deoxy-D-xylulose 5-phosphate. Catalysis depends on H192, which acts as the Proton donor. Residues G193 and 214–215 (GH) each bind 3-amino-2-oxopropyl phosphate.

Belongs to the PNP synthase family. Homooctamer; tetramer of dimers.

The protein resides in the cytoplasm. The enzyme catalyses 3-amino-2-oxopropyl phosphate + 1-deoxy-D-xylulose 5-phosphate = pyridoxine 5'-phosphate + phosphate + 2 H2O + H(+). Its pathway is cofactor biosynthesis; pyridoxine 5'-phosphate biosynthesis; pyridoxine 5'-phosphate from D-erythrose 4-phosphate: step 5/5. Functionally, catalyzes the complicated ring closure reaction between the two acyclic compounds 1-deoxy-D-xylulose-5-phosphate (DXP) and 3-amino-2-oxopropyl phosphate (1-amino-acetone-3-phosphate or AAP) to form pyridoxine 5'-phosphate (PNP) and inorganic phosphate. The chain is Pyridoxine 5'-phosphate synthase from Synechocystis sp. (strain ATCC 27184 / PCC 6803 / Kazusa).